The primary structure comprises 243 residues: NAD-dependent protein deacylase SIR2rp3 (243 aa).

Positions 1-239 (MKACRCITIL…PTWVDQVLKE (239 aa)) constitute a Deacetylase sirtuin-type domain. 12–31 (GAGISAESGISTFRDSNGLW) lines the NAD(+) pocket. Residues tyrosine 56 and arginine 59 each coordinate substrate. Residue 95 to 98 (QNVD) participates in NAD(+) binding. Histidine 113 serves as the catalytic Proton acceptor. Zn(2+) is bound by residues cysteine 121 and cysteine 141. NAD(+)-binding positions include 181 to 183 (GTS) and alanine 225.

The protein belongs to the sirtuin family. Class III subfamily. The cofactor is Zn(2+).

Its subcellular location is the mitochondrion. It catalyses the reaction N(6)-malonyl-L-lysyl-[protein] + NAD(+) + H2O = 2''-O-malonyl-ADP-D-ribose + nicotinamide + L-lysyl-[protein]. It carries out the reaction N(6)-succinyl-L-lysyl-[protein] + NAD(+) + H2O = 2''-O-succinyl-ADP-D-ribose + nicotinamide + L-lysyl-[protein]. The enzyme catalyses N(6)-glutaryl-L-lysyl-[protein] + NAD(+) + H2O = 2''-O-glutaryl-ADP-D-ribose + nicotinamide + L-lysyl-[protein]. NAD-dependent lysine demalonylase, desuccinylase and deglutarylase that specifically removes malonyl, succinyl and glutaryl groups on target proteins. Has weak NAD-dependent protein deacetylase activity; however this activity may not be physiologically relevant in vivo. In Leishmania major, this protein is NAD-dependent protein deacylase SIR2rp3 (SIR2rp3).